The sequence spans 128 residues: Putative esterase aq_1494 (128 aa).

Aspartate 15 is a catalytic residue.

Belongs to the 4-hydroxybenzoyl-CoA thioesterase family.

This chain is Putative esterase aq_1494, found in Aquifex aeolicus (strain VF5).